The sequence spans 329 residues: Prostaglandin reductase 1 (329 aa).

Residue threonine 18 is modified to Phosphothreonine. Position 20 is a phosphoserine (serine 20). NADP(+) contacts are provided by residues 152–155, lysine 178, tyrosine 193, asparagine 217, 239–245, 270–272, and asparagine 321; these read GAVG, CGAISVY, and FVV. Residue lysine 178 is modified to N6-(2-hydroxyisobutyryl)lysine; alternate. N6-acetyllysine; alternate is present on lysine 178.

The protein belongs to the NADP-dependent oxidoreductase L4BD family. As to quaternary structure, monomer or homodimer.

The protein resides in the cytoplasm. It carries out the reaction 13,14-dihydro-15-oxo-prostaglandin E1 + NADP(+) = 15-oxoprostaglandin E1 + NADPH + H(+). The enzyme catalyses 13,14-dihydro-15-oxo-prostaglandin E2 + NADP(+) = 15-oxoprostaglandin E2 + NADPH + H(+). The catalysed reaction is 13,14-dihydro-15-oxo-prostaglandin F1alpha + NADP(+) = 15-oxoprostaglandin F1alpha + NADPH + H(+). It catalyses the reaction 13,14-dihydro-15-oxo-PGF2alpha + NADP(+) = 15-oxoprostaglandin F2alpha + NADPH + H(+). It carries out the reaction leukotriene B4 + NADP(+) = 12-oxo-leukotriene B4 + NADPH + H(+). The enzyme catalyses 20-hydroxy-leukotriene B4 + NADP(+) = 12-oxo-20-hydroxy-leukotriene B4 + NADPH + H(+). The catalysed reaction is 6-trans-leukotriene B4 + NADP(+) = 12-oxo-(5S)-hydroxy-(6E,8E,10E,14Z)-eicosatetraenoate + NADPH + H(+). It catalyses the reaction (5S,12S)-dihydroxy-(6E,10E,12E,14Z)-eicosatetraenoate + NADP(+) = 12-oxo-(5S)-hydroxy-(6E,8E,10E,14Z)-eicosatetraenoate + NADPH + H(+). It carries out the reaction an n-alkanal + NADP(+) = an alk-2-enal + NADPH + H(+). The enzyme catalyses hexanal + NADP(+) = (E)-hex-2-enal + NADPH + H(+). The catalysed reaction is octanal + NADP(+) = (2E)-octenal + NADPH + H(+). It catalyses the reaction decanal + NADP(+) = (2E)-decenal + NADPH + H(+). It carries out the reaction dodecanal + NADP(+) = (2E)-dodecenal + NADPH + H(+). The enzyme catalyses 4-hydroxynonanal + NADP(+) = (E)-4-hydroxynon-2-enal + NADPH + H(+). The catalysed reaction is pentan-2-one + NADP(+) = (E)-pent-3-en-2-one + NADPH + H(+). It catalyses the reaction nonan-2-one + NADP(+) = (3E)-nonen-2-one + NADPH + H(+). Its function is as follows. NAD(P)H-dependent oxidoreductase involved in metabolic inactivation of pro- and anti-inflammatory eicosanoids: prostaglandins (PG), leukotrienes (LT) and lipoxins (LX). Catalyzes with high efficiency the reduction of the 13,14 double bond of 15-oxoPGs, including 15-oxo-PGE1, 15-oxo-PGE2, 15-oxo-PGF1-alpha and 15-oxo-PGF2-alpha. Catalyzes with lower efficiency the oxidation of the hydroxyl group at C12 of LTB4 and its derivatives, converting them into biologically less active 12-oxo-LTB4 metabolites. Reduces 15-oxo-LXA4 to 13,14 dihydro-15-oxo-LXA4, enhancing neutrophil recruitment at the inflammatory site. Plays a role in metabolic detoxification of alkenals and ketones. Reduces alpha,beta-unsaturated alkenals and ketones, particularly those with medium-chain length, showing highest affinity toward (2E)-decenal and (3E)-3-nonen-2-one. May inactivate 4-hydroxy-2-nonenal, a cytotoxic lipid constituent of oxidized low-density lipoprotein particles. The chain is Prostaglandin reductase 1 (PTGR1) from Bos taurus (Bovine).